We begin with the raw amino-acid sequence, 354 residues long: Annexin A13 (354 aa).

Annexin repeat units follow at residues 26 to 97 (NDPN…MLLT), 98 to 177 (DTDK…ALLQ), 203 to 275 (NLVE…LTLN), and 279 to 350 (NRPK…ALIG). Met-39, Gly-41, Gly-43, Thr-44, Glu-46, Glu-83, Met-111, Gly-113, Gly-115, Glu-118, Asp-163, Asp-265, Met-292, Gly-294, Leu-295, Gly-296, and Glu-336 together coordinate Ca(2+).

It belongs to the annexin family. In terms of assembly, homodimer.

It is found in the tegument. Its subcellular location is the secreted. The protein localises to the extracellular exosome. The protein resides in the host cell. Functionally, involved in reproduction of the worm. Involved in host-parasite interaction. Delivered into the host cell by means of parasite exosomes. Binds to acidic phospholipid membranes in a calcium-dependent manner in vitro. Causes aggregation of liposomes in the presence of calcium, but not in its absence. Likely to promote membrane fusion. May provide structural integrity within the tegument. The sequence is that of Annexin A13 from Schistosoma japonicum (Blood fluke).